The sequence spans 275 residues: Putative pyruvate, phosphate dikinase regulatory protein (275 aa).

Residue 149-156 coordinates ADP; the sequence is GVSRTSKT.

It belongs to the pyruvate, phosphate/water dikinase regulatory protein family. PDRP subfamily.

The enzyme catalyses N(tele)-phospho-L-histidyl/L-threonyl-[pyruvate, phosphate dikinase] + ADP = N(tele)-phospho-L-histidyl/O-phospho-L-threonyl-[pyruvate, phosphate dikinase] + AMP + H(+). It carries out the reaction N(tele)-phospho-L-histidyl/O-phospho-L-threonyl-[pyruvate, phosphate dikinase] + phosphate + H(+) = N(tele)-phospho-L-histidyl/L-threonyl-[pyruvate, phosphate dikinase] + diphosphate. Bifunctional serine/threonine kinase and phosphorylase involved in the regulation of the pyruvate, phosphate dikinase (PPDK) by catalyzing its phosphorylation/dephosphorylation. The sequence is that of Putative pyruvate, phosphate dikinase regulatory protein from Levilactobacillus brevis (strain ATCC 367 / BCRC 12310 / CIP 105137 / JCM 1170 / LMG 11437 / NCIMB 947 / NCTC 947) (Lactobacillus brevis).